The following is a 925-amino-acid chain: Centrosomal protein of 104 kDa (925 aa).

A coiled-coil region spans residues 209–289 (EVAQIIRKLD…RAEVYEQLEL (81 aa)). HEAT repeat units follow at residues 529–567 (TIPV…LQII) and 604–640 (GFTI…YRQH). A coiled-coil region spans residues 677–725 (DAEMRARRKAATEEAEKQKKEEIKALQGQLAALKEIQAEVQEKESDAVK). The interval 883-925 (PALQPGKSSAVAASGPLGSKAGSKIPTPKGGLSKSSSRTYAKR) is disordered. A compositionally biased stretch (polar residues) spans 915 to 925 (SKSSSRTYAKR).

In terms of assembly, interacts with CCP110 and CEP97. Interacts with ARMC9, TOGARAM1, CCDC66 and CSPP1.

The protein resides in the cell projection. The protein localises to the cilium. It is found in the cytoplasm. Its subcellular location is the cytoskeleton. It localises to the microtubule organizing center. The protein resides in the centrosome. The protein localises to the centriole. It is found in the spindle pole. Its function is as follows. Required for ciliogenesis and for structural integrity at the ciliary tip. This Homo sapiens (Human) protein is Centrosomal protein of 104 kDa (CEP104).